The following is a 448-amino-acid chain: Vimentin (448 aa).

Residues 1–77 (PRHLEPAGSN…FSLADAINTE (77 aa)) form a head region. S9 is subject to Phosphoserine. Residue T16 is glycosylated (O-linked (GlcNAc) threonine). At S17 the chain carries Phosphoserine; by PKC; alternate. S17 is a glycosylation site (O-linked (GlcNAc) serine; alternate). Position 22 is a phosphoserine; by CaMK2, PKA, PKC and ROCK2 (S22). Phosphoserine occurs at positions 29, 31, and 33. Y35 carries the phosphotyrosine modification. Phosphoserine is present on S37. A Phosphoserine; by CDK5 and CDK1 modification is found at S38. Phosphotyrosine is present on Y43. S48 bears the Phosphoserine; by PKA and PKC mark. S54 carries the post-translational modification Phosphoserine; by AURKB and ROCK2. A Phosphoserine modification is found at S55. Residue S65 is modified to Phosphoserine; by CaMK2. Position 69 is a phosphoserine (S69). The coil 1A stretch occupies residues 78–113 (FKNTRTNEKVELQELNDRFADYIDKVRFLEQQNKIL). Residues 78 to 113 (FKNTRTNEKVELQELNDRFADYIDKVRFLEQQNKIL) are a coiled coil. One can recognise an IF rod domain in the interval 85–393 (EKVELQELND…KLLEGEESRI (309 aa)). Residue K86 forms a Glycyl lysine isopeptide (Lys-Gly) (interchain with G-Cter in SUMO2) linkage. Y99 carries the phosphotyrosine modification. K102, K111, and K121 each carry N6-acetyllysine; alternate. N6-succinyllysine; alternate occurs at positions 102 and 111. Glycyl lysine isopeptide (Lys-Gly) (interchain with G-Cter in SUMO2); alternate cross-links involve residues K102, K111, and K121. The interval 114–135 (LAELEQLKGQGKSRLGDLYEEE) is linker 1. Phosphoserine is present on S126. Residues 136 to 227 (MRELRRQVDQ…KLHDEEIQEL (92 aa)) are a coiled coil. Positions 136–227 (MRELRRQVDQ…KLHDEEIQEL (92 aa)) are coil 1B. At K150 the chain carries N6-acetyllysine. The residue at position 170 (K170) is an N6-acetyllysine; alternate. K170 bears the N6-succinyllysine; alternate mark. A Phosphoserine modification is found at S196. At K205 the chain carries N6-acetyllysine; alternate. K205 participates in a covalent cross-link: Glycyl lysine isopeptide (Lys-Gly) (interchain with G-Cter in SUMO2); alternate. Residue S208 is modified to Phosphoserine. At K217 the chain carries N6-acetyllysine. The linker 12 stretch occupies residues 228-250 (QAQIQEQHVQIDVDVSKPDLTAA). K244 participates in a covalent cross-link: Glycyl lysine isopeptide (Lys-Gly) (interchain with G-Cter in SUMO2). Positions 251–389 (LRDVRQQYES…ATYRKLLEGE (139 aa)) are coil 2. The residue at position 276 (K276) is an N6-acetyllysine; alternate. K276 is modified (N6-succinyllysine; alternate). K276 participates in a covalent cross-link: Glycyl lysine isopeptide (Lys-Gly) (interchain with G-Cter in SUMO2); alternate. Position 281 is a phosphoserine (S281). Residues 285–389 (NRNNDALRQA…ATYRKLLEGE (105 aa)) are a coiled coil. K295 is covalently cross-linked (Glycyl lysine isopeptide (Lys-Gly) (interchain with G-Cter in SUMO2)). A Phosphoserine modification is found at S307. The short motif at 308–311 (LTCE) is the [IL]-x-C-x-x-[DE] motif element. K355 carries the post-translational modification N6-acetyllysine; alternate. K355 participates in a covalent cross-link: Glycyl lysine isopeptide (Lys-Gly) (interchain with G-Cter in SUMO2); alternate. A tail region spans residues 390 to 448 (ESRISLPLPNFSSLNLRETNLESLPLVDTHSKRTLLIKTVETRDGQVINETSQHHDDLE). Phosphoserine is present on residues S391, S394, S401, and S402. A Phosphothreonine modification is found at T408. Phosphoserine is present on S412. The residue at position 418 (T418) is a Phosphothreonine. S420 is subject to Phosphoserine. A Glycyl lysine isopeptide (Lys-Gly) (interchain with G-Cter in SUMO2) cross-link involves residue K421. K427 carries the post-translational modification N6-acetyllysine; alternate. K427 bears the N6-succinyllysine; alternate mark. K427 participates in a covalent cross-link: Glycyl lysine isopeptide (Lys-Gly) (interchain with G-Cter in SUMO2); alternate. Residue K427 forms a Glycyl lysine isopeptide (Lys-Gly) (interchain with G-Cter in SUMO1); alternate linkage. Phosphothreonine is present on residues T428 and T440. Phosphoserine is present on S441.

The protein belongs to the intermediate filament family. Homomer assembled from elementary dimers. Identified in complexes that contain VIM, EZR, AHNAK, BFSP1, BFSP2, ANK2, PLEC, PRX and spectrin. Interacts with BCAS3. Interacts with LGSN. Interacts with SYNM. Interacts (via rod region) with PLEC (via CH 1 domain). Interacts with STK33. Interacts with LARP6. Interacts with RAB8B. Interacts with TOR1A; the interaction associates TOR1A with the cytoskeleton. Interacts with TOR1AIP1. Interacts with TOR1AIP1. Interacts with DIAPH1. Interacts with EPPK1; interaction is dependent of higher-order structure of intermediate filament. Interacts with the non-receptor tyrosine kinase SRMS; the interaction leads to phosphorylation of VIM. Interacts with NOD2. Interacts (via head region) with CORO1C. Interacts with HDGF. Interacts with PRKCE (via phorbol-ester/DAG-type 2 domain). Interacts with BFSP2. Interacts with PPL. Interacts with PKP1 and PKP2. Interacts with SCRIB (via PDZ domains); the interaction protects SCRIB from proteasomal degradation and facilitates SCRIB localization to intermediate filaments, the interaction is reduced by cell contact inhibition. In terms of processing, one of the most prominent phosphoproteins in various cells of mesenchymal origin. Phosphorylation is enhanced during cell division, at which time vimentin filaments are significantly reorganized. Phosphorylation by PKN1 inhibits the formation of filaments. Filament disassembly during mitosis is promoted by phosphorylation at Ser-37 as well as by nestin. Phosphorylated at Ser-38 by CDK5 during neutrophil secretion in the cytoplasm. Phosphorylated by STK33. Phosphorylated on tyrosine residues by SRMS. S-nitrosylation is induced by interferon-gamma and oxidatively-modified low-densitity lipoprotein (LDL(ox)) possibly implicating the iNOS-S100A8/9 transnitrosylase complex.

It localises to the cytoplasm. Its subcellular location is the cytoskeleton. It is found in the nucleus matrix. The protein resides in the cell membrane. In terms of biological role, vimentins are class-III intermediate filaments found in various non-epithelial cells, especially mesenchymal cells. Vimentin is attached to the nucleus, endoplasmic reticulum, and mitochondria, either laterally or terminally. Plays a role in cell directional movement, orientation, cell sheet organization and Golgi complex polarization at the cell migration front. Protects SCRIB from proteasomal degradation and facilitates its localization to intermediate filaments in a cell contact-mediated manner. Functionally, involved with LARP6 in the stabilization of type I collagen mRNAs for CO1A1 and CO1A2. This is Vimentin (VIM) from Cricetulus griseus (Chinese hamster).